Here is a 342-residue protein sequence, read N- to C-terminus: MITHQQALNRLIDGNELFFDEMLDIMRQIMRGDMTPAQIAGILIGLRVKVESVSEIAAAATVMREFATTVPVAERRHLVDTCGTGGDGAHTFNISTTAAFIVAAAGAQVAKHGGRSVSSSSGSADVLEALGVKLALSAENVGRCIDEIGLGFMFAPNHHTAMKYVAPVRRELGVRTIFNILGPLTNPAGAENQLMGVFHPDLVGIQARVLSQLGARHAMVVHGRDGLDEISLSGPTLVAELKNGWIREYELDPAEFGFSLCSAADLAAPTAEDSKARLLAVLDNQPGPARDIVCLNAGAAIYVAGVTDSLAEGIRLAQELLTSGAARQKLGQLVELTHKLAA.

Residues G83, 86–87 (GD), T91, 93–96 (NIST), 111–119 (KHGGRSVSS), and S123 contribute to the 5-phospho-alpha-D-ribose 1-diphosphate site. Residue G83 coordinates anthranilate. S95 contacts Mg(2+). R169 is an anthranilate binding site. The Mg(2+) site is built by D228 and E229.

The protein belongs to the anthranilate phosphoribosyltransferase family. Homodimer. The cofactor is Mg(2+).

It carries out the reaction N-(5-phospho-beta-D-ribosyl)anthranilate + diphosphate = 5-phospho-alpha-D-ribose 1-diphosphate + anthranilate. It functions in the pathway amino-acid biosynthesis; L-tryptophan biosynthesis; L-tryptophan from chorismate: step 2/5. In terms of biological role, catalyzes the transfer of the phosphoribosyl group of 5-phosphorylribose-1-pyrophosphate (PRPP) to anthranilate to yield N-(5'-phosphoribosyl)-anthranilate (PRA). This is Anthranilate phosphoribosyltransferase from Laribacter hongkongensis (strain HLHK9).